Reading from the N-terminus, the 391-residue chain is tRNA-specific 2-thiouridylase MnmA (391 aa).

Residues 35 to 42 (GLSGGVDS) and L61 each bind ATP. The Nucleophile role is filled by C122. Cysteines 122 and 221 form a disulfide. G147 is an ATP binding site. Residues 171–173 (KDQ) are interaction with tRNA. C221 acts as the Cysteine persulfide intermediate in catalysis. The interval 328-329 (RY) is interaction with tRNA.

It belongs to the MnmA/TRMU family.

It is found in the cytoplasm. It carries out the reaction S-sulfanyl-L-cysteinyl-[protein] + uridine(34) in tRNA + AH2 + ATP = 2-thiouridine(34) in tRNA + L-cysteinyl-[protein] + A + AMP + diphosphate + H(+). Catalyzes the 2-thiolation of uridine at the wobble position (U34) of tRNA, leading to the formation of s(2)U34. This chain is tRNA-specific 2-thiouridylase MnmA, found in Synechococcus sp. (strain CC9311).